The following is a 157-amino-acid chain: Small ribosomal subunit protein uS7 (157 aa).

It belongs to the universal ribosomal protein uS7 family. As to quaternary structure, part of the 30S ribosomal subunit. Contacts proteins S9 and S11.

Functionally, one of the primary rRNA binding proteins, it binds directly to 16S rRNA where it nucleates assembly of the head domain of the 30S subunit. Is located at the subunit interface close to the decoding center, probably blocks exit of the E-site tRNA. This chain is Small ribosomal subunit protein uS7, found in Borreliella afzelii (strain PKo) (Borrelia afzelii).